The chain runs to 137 residues: uncharacterized protein (137 aa).

The HTH marR-type domain occupies 5 to 136 (NRHLIHQINQ…FSHLFRMFLQ (132 aa)). Positions 51 to 74 (QKEIWSYLNVEAPTVTRTIKRLEE) form a DNA-binding region, H-T-H motif.

This is an uncharacterized protein from Bacillus subtilis (strain 168).